We begin with the raw amino-acid sequence, 134 residues long: Acyl carrier protein, chloroplastic (134 aa).

Residues 1-51 constitute a chloroplast transit peptide; that stretch reads MATTFSASVSTLATSLATPTRISFQKPALVSRTNLSFNLRRSIPTRLSVSC. One can recognise a Carrier domain in the interval 55–130; sequence PETIEKVSKI…EAAELIEELV (76 aa). The residue at position 90 (Ser90) is an O-(pantetheine 4'-phosphoryl)serine.

This sequence belongs to the acyl carrier protein (ACP) family. Post-translationally, 4'-phosphopantetheine is transferred from CoA to a specific serine of apo-ACP by acpS. This modification is essential for activity because fatty acids are bound in thioester linkage to the sulfhydryl of the prosthetic group. In terms of tissue distribution, seed.

The protein localises to the plastid. Its subcellular location is the chloroplast. The protein operates within lipid metabolism; fatty acid biosynthesis. Functionally, carrier of the growing fatty acid chain in fatty acid biosynthesis. The polypeptide is Acyl carrier protein, chloroplastic (ACL1.A3) (Brassica napus (Rape)).